Reading from the N-terminus, the 257-residue chain is 7-carboxy-7-deazaguanine synthase (257 aa).

Substrate contacts are provided by residues 29 to 31 (LQG) and arginine 44. The region spanning 35 to 253 (LAGTPSVFVR…PRLHVALWND (219 aa)) is the Radical SAM core domain. Residues cysteine 48, cysteine 52, and cysteine 55 each coordinate [4Fe-4S] cluster. Serine 57 lines the Mg(2+) pocket. Threonine 90 contacts substrate. Glycine 92 provides a ligand contact to S-adenosyl-L-methionine. The tract at residues 133–153 (VSPKLASSTPTAETDPKGDGE) is disordered.

This sequence belongs to the radical SAM superfamily. 7-carboxy-7-deazaguanine synthase family. As to quaternary structure, homodimer. [4Fe-4S] cluster serves as cofactor. The cofactor is S-adenosyl-L-methionine. Mg(2+) is required as a cofactor.

The catalysed reaction is 6-carboxy-5,6,7,8-tetrahydropterin + H(+) = 7-carboxy-7-deazaguanine + NH4(+). It functions in the pathway purine metabolism; 7-cyano-7-deazaguanine biosynthesis. Catalyzes the complex heterocyclic radical-mediated conversion of 6-carboxy-5,6,7,8-tetrahydropterin (CPH4) to 7-carboxy-7-deazaguanine (CDG), a step common to the biosynthetic pathways of all 7-deazapurine-containing compounds. The sequence is that of 7-carboxy-7-deazaguanine synthase from Halobacterium salinarum (strain ATCC 29341 / DSM 671 / R1).